Reading from the N-terminus, the 331-residue chain is Vitamin B12 import system permease protein BtuC (331 aa).

The next 9 helical transmembrane spans lie at 18 to 38 (WLFG…CAGE), 64 to 84 (LAVL…QALF), 91 to 111 (PGLL…VLLG), 114 to 134 (VLPG…ITFI), 149 to 169 (LLAG…AVYF), 194 to 214 (LWLM…SQPL), 243 to 263 (GWMV…GLVI), 277 to 297 (VLLP…DIIA), and 305 to 325 (ELPI…WLLL).

Belongs to the binding-protein-dependent transport system permease family. FecCD subfamily. In terms of assembly, the complex is composed of two ATP-binding proteins (BtuD), two transmembrane proteins (BtuC) and a solute-binding protein (BtuF).

Its subcellular location is the cell inner membrane. Its function is as follows. Part of the ABC transporter complex BtuCDF involved in vitamin B12 import. Involved in the translocation of the substrate across the membrane. This chain is Vitamin B12 import system permease protein BtuC, found in Klebsiella pneumoniae subsp. pneumoniae (strain ATCC 700721 / MGH 78578).